The primary structure comprises 473 residues: Photosystem II CP43 reaction center protein (473 aa).

The propeptide occupies 1–14; that stretch reads MKTLYSLRRFYHVE. N-acetylthreonine is present on Thr15. Thr15 bears the Phosphothreonine mark. The next 5 membrane-spanning stretches (helical) occupy residues 69 to 93, 134 to 155, 178 to 200, 255 to 275, and 291 to 312; these read LFEVAHFVPEKPMYEQGLILLPHLA, LLGPETLEESFPFFGYVWKDRN, KALYFGGVYDTWAPGGGDVRKIT, KPFAWARRAFVWSGEAYLSYS, and WFNNTAYPSEFYGPTGPEASQA. Glu367 contributes to the [CaMn4O5] cluster binding site. Residues 447 to 471 form a helical membrane-spanning segment; sequence RARAAAAGFEKGIDRDFEPVLSMTP.

This sequence belongs to the PsbB/PsbC family. PsbC subfamily. In terms of assembly, PSII is composed of 1 copy each of membrane proteins PsbA, PsbB, PsbC, PsbD, PsbE, PsbF, PsbH, PsbI, PsbJ, PsbK, PsbL, PsbM, PsbT, PsbX, PsbY, PsbZ, Psb30/Ycf12, at least 3 peripheral proteins of the oxygen-evolving complex and a large number of cofactors. It forms dimeric complexes. Requires Binds multiple chlorophylls and provides some of the ligands for the Ca-4Mn-5O cluster of the oxygen-evolving complex. It may also provide a ligand for a Cl- that is required for oxygen evolution. PSII binds additional chlorophylls, carotenoids and specific lipids. as cofactor.

The protein resides in the plastid. Its subcellular location is the chloroplast thylakoid membrane. Its function is as follows. One of the components of the core complex of photosystem II (PSII). It binds chlorophyll and helps catalyze the primary light-induced photochemical processes of PSII. PSII is a light-driven water:plastoquinone oxidoreductase, using light energy to abstract electrons from H(2)O, generating O(2) and a proton gradient subsequently used for ATP formation. This chain is Photosystem II CP43 reaction center protein, found in Ipomoea purpurea (Common morning glory).